The chain runs to 308 residues: D-alanine--D-alanine ligase (308 aa).

An ATP-grasp domain is found at 109-302 (KAAYAAAGLP…FGALCRWIVE (194 aa)). Residue 136–186 (MPPPYVIKPYNEGSSVGVYLVPEGAEAAPELADDLPDTLMVEAFVPGRELT) participates in ATP binding. Residues Asp-253, Glu-269, and Asn-271 each contribute to the Mg(2+) site.

Belongs to the D-alanine--D-alanine ligase family. Requires Mg(2+) as cofactor. The cofactor is Mn(2+).

It is found in the cytoplasm. The catalysed reaction is 2 D-alanine + ATP = D-alanyl-D-alanine + ADP + phosphate + H(+). It participates in cell wall biogenesis; peptidoglycan biosynthesis. Its function is as follows. Cell wall formation. This Dinoroseobacter shibae (strain DSM 16493 / NCIMB 14021 / DFL 12) protein is D-alanine--D-alanine ligase.